A 69-amino-acid polypeptide reads, in one-letter code: uncharacterized protein (69 aa).

Residues isoleucine 10 to leucine 64 enclose the HTH cro/C1-type domain. The H-T-H motif DNA-binding region spans glutamine 21–arginine 40.

This is an uncharacterized protein from Bacillus subtilis (strain 168).